The sequence spans 1616 residues: Putative inactive phenolphthiocerol synthesis polyketide synthase type I Pks1 (1616 aa).

The acyltransferase stretch occupies residues 83–397 (TVVVFPGQGA…GQVFTTGVPV (315 aa)). The active-site For acyltransferase activity is the S174. Positions 445–567 (HALLGAVVER…GMLGVAAAET (123 aa)) are N-terminal hotdog fold. The dehydratase stretch occupies residues 445–605 (HALLGAVVER…YAYGPAFQGL (161 aa)). One can recognise a PKS/mFAS DH domain in the interval 445–719 (HALLGAVVER…TRPITAEQLR (275 aa)). H477 acts as the Proton acceptor; for dehydratase activity in catalysis. Residues 579 to 719 (AESVDISDGY…TRPITAEQLR (141 aa)) form a C-terminal hotdog fold region. D640 functions as the Proton donor; for dehydratase activity in the catalytic mechanism. Residues 910–1215 (GTLEDLVIQP…QARHIGKVVL (306 aa)) are enoylreductase. NADP(+)-binding positions include 1040-1057 (VLIH…VQLA) and 1229-1244 (TVVI…GVLA). Residues 1228–1409 (GTVVITGATG…SLAWGLWEQP (182 aa)) are beta-ketoacyl reductase. One can recognise a Carrier domain in the interval 1514 to 1589 (ELLVGLVCLQ…AVAEYVAQQM (76 aa)). An O-(pantetheine 4'-phosphoryl)serine modification is found at S1549. Over residues 1588–1604 (QMSGSRPTESGDPTSQV) the composition is skewed to polar residues. Residues 1588–1616 (QMSGSRPTESGDPTSQVVEPAAAEVSVHA) form a disordered region.

Pantetheine 4'-phosphate serves as cofactor.

The protein operates within lipid metabolism; fatty acid biosynthesis. May play a role in phthiocerol biosynthesis. The chain is Putative inactive phenolphthiocerol synthesis polyketide synthase type I Pks1 (pks1) from Mycobacterium tuberculosis (strain ATCC 25618 / H37Rv).